The sequence spans 89 residues: Teretoxin Tan6.8 (89 aa).

Residues Met-1–Glu-21 form the signal peptide. Residues Glu-22–His-42 are disordered. Positions Glu-22–Arg-44 are excised as a propeptide.

In terms of processing, contains 3 disulfide bonds. As to expression, expressed by the venom duct.

It localises to the secreted. This Terebra anilis (Auger snail) protein is Teretoxin Tan6.8.